Reading from the N-terminus, the 237-residue chain is UPF0502 protein RB6530 (237 aa).

The span at A187–P202 shows a compositional bias: polar residues. The interval A187–I211 is disordered.

Belongs to the UPF0502 family.

This Rhodopirellula baltica (strain DSM 10527 / NCIMB 13988 / SH1) protein is UPF0502 protein RB6530.